We begin with the raw amino-acid sequence, 160 residues long: Phosphopantetheine adenylyltransferase (160 aa).

A substrate-binding site is contributed by S8. ATP-binding positions include 8–9 (SF) and H16. Substrate-binding residues include K40, L73, and K87. ATP-binding positions include 88-90 (GLR), E98, and 122-128 (YGYVSST).

The protein belongs to the bacterial CoaD family. Homohexamer. Mg(2+) is required as a cofactor.

It is found in the cytoplasm. The enzyme catalyses (R)-4'-phosphopantetheine + ATP + H(+) = 3'-dephospho-CoA + diphosphate. It participates in cofactor biosynthesis; coenzyme A biosynthesis; CoA from (R)-pantothenate: step 4/5. In terms of biological role, reversibly transfers an adenylyl group from ATP to 4'-phosphopantetheine, yielding dephospho-CoA (dPCoA) and pyrophosphate. This Corynebacterium glutamicum (strain R) protein is Phosphopantetheine adenylyltransferase.